A 117-amino-acid chain; its full sequence is Large ribosomal subunit protein bL20c (117 aa).

Belongs to the bacterial ribosomal protein bL20 family.

The protein localises to the plastid. It is found in the chloroplast. Binds directly to 23S ribosomal RNA and is necessary for the in vitro assembly process of the 50S ribosomal subunit. It is not involved in the protein synthesizing functions of that subunit. This Lemna minor (Common duckweed) protein is Large ribosomal subunit protein bL20c.